A 66-amino-acid chain; its full sequence is Large ribosomal subunit protein bL33c (66 aa).

It belongs to the bacterial ribosomal protein bL33 family.

The protein localises to the plastid. The protein resides in the chloroplast. This chain is Large ribosomal subunit protein bL33c, found in Illicium oligandrum (Star anise).